Here is a 278-residue protein sequence, read N- to C-terminus: MAPSGSLRIPVAVLLLLLWGAPWAHGKRSDVRIITDENWRELLEGEWMIEFYAPWCPACQNLQPEWESFAEWGEDLEVNVAKVDVTEQPGLSGRFIITALPTIYHCKDGEFRRYQGPRTKKDFINFISDKEWKSIEPVSSWFGPGSILMSSMSALFQLSMWIRTCHNYFIEDLGLPIWGSYTVFALATLLSGLLLGLFMIFVADCLCPSKRRRPQPYPSRKLLPESSQPLKKVEEEQEADVEDVSEEESESKEGANKDFAQNAVRQRSVGPSLATDKS.

A signal peptide spans 1 to 26 (MAPSGSLRIPVAVLLLLLWGAPWAHG). A Thioredoxin domain is found at 27–132 (KRSDVRIITD…FINFISDKEW (106 aa)). At 27 to 180 (KRSDVRIITD…EDLGLPIWGS (154 aa)) the chain is on the extracellular side. Residues C56 and C59 each act as nucleophile in the active site. The cysteines at positions 56 and 59 are disulfide-linked. The chain crosses the membrane as a helical span at residues 181 to 203 (YTVFALATLLSGLLLGLFMIFVA). At 204–278 (DCLCPSKRRR…VGPSLATDKS (75 aa)) the chain is on the cytoplasmic side. 2 S-palmitoyl cysteine lipidation sites follow: C205 and C207. Residues 213–278 (RPQPYPSRKL…VGPSLATDKS (66 aa)) form a disordered region. Residues S226, S245, S268, S272, and S278 each carry the phosphoserine modification. The span at 235 to 250 (EEQEADVEDVSEEESE) shows a compositional bias: acidic residues.

As to quaternary structure, interacts with ATP2A2. Post-translationally, palmitoylated; palmitoylation is required for localization to mitochondria-associated endoplasmic reticulum membrane (MAM).

The protein resides in the endoplasmic reticulum membrane. It localises to the mitochondrion membrane. The protein localises to the secreted. The enzyme catalyses Catalyzes the rearrangement of -S-S- bonds in proteins.. Its function is as follows. Thiredoxin domain-containing protein that participates in various redox reactions through the reversible oxidation of its active center dithiol to a disulfide and catalyze dithiol-disulfide exchange reactions. Acts as a key inhibitor of the alternative triglyceride biosynthesis pathway by inhibiting the activity of TMEM68/DIESL at the endoplasmic reticulum, thereby restricting accumulation of triacylglycerol. The alternative triglyceride biosynthesis pathway mediates formation of triacylglycerol from diacylglycerol and membrane phospholipids. Acts as a protein disulfide isomerase by catalyzing formation or reduction of disulfide bonds. Specifically mediates formation of disulfide bonds of transmembrane proteins at the endoplasmic reticulum membrane. Involved in endoplasmic reticulum-associated degradation (ERAD) via its protein disulfide isomerase activity by acting on folding-defective polypeptides at the endoplasmic reticulum membrane. Acts as a negative regulator of platelet aggregation following secretion in the extracellular space. Acts as a regulator of endoplasmic reticulum-mitochondria contact sites via its ability to regulate redox signals. Regulates endoplasmic reticulum-mitochondria Ca(2+) flux. This is Thioredoxin-related transmembrane protein 1 (TMX1) from Bos taurus (Bovine).